The following is a 955-amino-acid chain: MTRKNTTTNPWAKFHGPNLGYVIEQYDLYVTGAGSVDPELQELFEIFGAPSFQDDVVTGDNTATHFSPQNTGNIEKILKVVQLVEQIRSFGHTLAHINPMEDAANGQSLLEKAMNELSDADLKAIPAKTVWPDAPEGIHTALDVIHRLKEVYTQSLAYEFSHIQDSEERAWLHQMVESNSLRQPLSNKKRTALLKRLTAVEGFEQFLHKTFVGQKRFSIEGVDMLVPVLDEIVLEGAKNGVEDVMIGMAHRGRLSVLAHVLEKPYSHMFAEFKHAKIEGAVANSGWTGDVKYHLGREQVVSNEEVSTRVTLANNPSHLEFVNPVVEGFARAAQENRKKSGLPEQDTSKSFVILVHGDAAFPGQGIVSETLNLSRLNAYQTGGTIHVIANNAVGFTTDSYDSRSTKYSSDLAKGFDIPIVHVNADDPEACLAAANLAIQYRMLFKKDFLIDLIGYRRYGHNEMDDPAVTQPQVYKKIKNHPTVRAIYADQLQAAGVLNADEIETITQFTQEQLKSDYAQVPPADTSDATIHVKVPDVVAKGIQPIDTGVELDSLRAINEGLLSWPEGFNVYPKVKKILERRKDALEENGKIEWALAESLAFASILQEGTPIRLTGQDSQRGTFAHRHIVLHDTDTNETYSPLHRLPNINASFSVHNSPLSEAAVVGYEYGYNVFAPETLVMWEAQYGDFSNTAQALFDQYVSAGRAKWGQKSGLVLLLPHGYEGQGPEHSSARPERFLQLAAENNWTVANLTSAAQYFHILRRQASILGTEAVRPLVLMTPKSLLRHPLTLSTASQLSEGRFQPALEQENLGTKPNKVKRLVLSTGKMAIDLAAEIESDKHEYNLDEIHIVRIEQLYPFPAEKVQSIIKRFKNLEEIIWVQEEPRNMGAWHYMAPILFELAGDKVKTGYIGRPDRSSPSGGDPFAHKAEQELIVSHALDVKYNFRQDKLEIEVFSN.

Belongs to the alpha-ketoglutarate dehydrogenase family. Homodimer. Part of the 2-oxoglutarate dehydrogenase (OGDH) complex composed of E1 (2-oxoglutarate dehydrogenase), E2 (dihydrolipoamide succinyltransferase) and E3 (dihydrolipoamide dehydrogenase); the complex contains multiple copies of the three enzymatic components (E1, E2 and E3). It depends on thiamine diphosphate as a cofactor.

The catalysed reaction is N(6)-[(R)-lipoyl]-L-lysyl-[protein] + 2-oxoglutarate + H(+) = N(6)-[(R)-S(8)-succinyldihydrolipoyl]-L-lysyl-[protein] + CO2. E1 component of the 2-oxoglutarate dehydrogenase (OGDH) complex which catalyzes the decarboxylation of 2-oxoglutarate, the first step in the conversion of 2-oxoglutarate to succinyl-CoA and CO(2). This chain is 2-oxoglutarate dehydrogenase E1 component, found in Bacillus cereus (strain AH820).